A 383-amino-acid polypeptide reads, in one-letter code: tRNA-specific 2-thiouridylase MnmA (383 aa).

ATP contacts are provided by residues 9–16 (GMSGGVDS) and Met35. Residues 95–97 (NPD) are interaction with target base in tRNA. Catalysis depends on Cys100, which acts as the Nucleophile. Cysteines 100 and 196 form a disulfide. Residue Gly124 coordinates ATP. The tract at residues 146–148 (KDQ) is interaction with tRNA. Catalysis depends on Cys196, which acts as the Cysteine persulfide intermediate. Residues 308-309 (RY) are interaction with tRNA.

Belongs to the MnmA/TRMU family.

Its subcellular location is the cytoplasm. It carries out the reaction S-sulfanyl-L-cysteinyl-[protein] + uridine(34) in tRNA + AH2 + ATP = 2-thiouridine(34) in tRNA + L-cysteinyl-[protein] + A + AMP + diphosphate + H(+). In terms of biological role, catalyzes the 2-thiolation of uridine at the wobble position (U34) of tRNA, leading to the formation of s(2)U34. This chain is tRNA-specific 2-thiouridylase MnmA, found in Burkholderia mallei (strain NCTC 10247).